Reading from the N-terminus, the 92-residue chain is Tachykinin-2 (92 aa).

An N-terminal signal peptide occupies residues 1–22 (MIRVGLILCCIFIVGVFEASSA). Residues 23–37 (DDILTAHNLIKRSEV) constitute a propeptide that is removed on maturation. Met-49 carries the post-translational modification Methionine amide. Residues 52–92 (SEELTRRLIQHPGSMSETSKRGPPKKGDFNPNELKPESNIC) constitute a propeptide that is removed on maturation. The interval 61–92 (QHPGSMSETSKRGPPKKGDFNPNELKPESNIC) is disordered.

This sequence belongs to the tachykinin family. In terms of tissue distribution, expressed in the posterior salivary gland and more specifically in the mucus-secreting gland cells.

Its subcellular location is the secreted. In terms of biological role, tachykinins are active peptides which excite neurons, evoke behavioral responses, are potent vasodilators and secretagogues, and contract (directly or indirectly) many smooth muscles. The protein is Tachykinin-2 of Octopus vulgaris (Common octopus).